The chain runs to 614 residues: MPAYRSRTTTHGRNMAGARGLWRATGMKDSDFGKPIIAVVNSFTQFVPGHVHLKDLGQLVAREIEKAGGVAKEFNTIAVDDGIAMGHDGMLYSLPSRELIADSVEYMVNAHCADAMVCISNCDKITPGMLMASLRLNIPTVFVSGGPMEAGKVVLAGKTQALDLVDAMVAAADDKISDEDVKVIERSACPTCGSCSGMFTANSMNCLTEALGLSLPGNGSTLATHADRKRLFVEAGHLIVDLAQRYYEQDDETALPRSIASKGAFENAMTLDIAMGGSTNTVLHILAAAHEGEVDFTMEDIDRLSRRVPVLCKVAPAKSDVHMEDVHRAGGIMAILGQLDNAGLINRDLPTVHTSSLGEALDHWDISRTSSQNVRDFFLAAPGGVPTQVAFSQDRRWDELDLDREKGVIRSAETPFSKDGGLAVLKGNLALDGCIVKTAGVDESILKFTGPARVFESQDASVKAILSNEIKAGDVVVIRYEGPRGGPGMQEMLYPTSYLKSKGLGKACALVTDGRFSGGTSGLSIGHASPEAAEGGTIGLVQEGDTIEIDIPNRTIRLAVSDAELDSRRAAMEAKGALAWKPEEKRKRKVTTALRAYAAFATSADKGAVRHVPE.

Position 81 (D81) interacts with Mg(2+). Residue C122 coordinates [2Fe-2S] cluster. 2 residues coordinate Mg(2+): D123 and K124. At K124 the chain carries N6-carboxylysine. A [2Fe-2S] cluster-binding site is contributed by C195. E491 serves as a coordination point for Mg(2+). The active-site Proton acceptor is S517.

The protein belongs to the IlvD/Edd family. As to quaternary structure, homodimer. The cofactor is [2Fe-2S] cluster. Mg(2+) is required as a cofactor.

The catalysed reaction is (2R)-2,3-dihydroxy-3-methylbutanoate = 3-methyl-2-oxobutanoate + H2O. The enzyme catalyses (2R,3R)-2,3-dihydroxy-3-methylpentanoate = (S)-3-methyl-2-oxopentanoate + H2O. It functions in the pathway amino-acid biosynthesis; L-isoleucine biosynthesis; L-isoleucine from 2-oxobutanoate: step 3/4. Its pathway is amino-acid biosynthesis; L-valine biosynthesis; L-valine from pyruvate: step 3/4. In terms of biological role, functions in the biosynthesis of branched-chain amino acids. Catalyzes the dehydration of (2R,3R)-2,3-dihydroxy-3-methylpentanoate (2,3-dihydroxy-3-methylvalerate) into 2-oxo-3-methylpentanoate (2-oxo-3-methylvalerate) and of (2R)-2,3-dihydroxy-3-methylbutanoate (2,3-dihydroxyisovalerate) into 2-oxo-3-methylbutanoate (2-oxoisovalerate), the penultimate precursor to L-isoleucine and L-valine, respectively. This Mesorhizobium japonicum (strain LMG 29417 / CECT 9101 / MAFF 303099) (Mesorhizobium loti (strain MAFF 303099)) protein is Dihydroxy-acid dehydratase 1.